A 146-amino-acid polypeptide reads, in one-letter code: Ribonuclease P protein component (146 aa).

The protein belongs to the RnpA family. In terms of assembly, consists of a catalytic RNA component (M1 or rnpB) and a protein subunit.

The catalysed reaction is Endonucleolytic cleavage of RNA, removing 5'-extranucleotides from tRNA precursor.. In terms of biological role, RNaseP catalyzes the removal of the 5'-leader sequence from pre-tRNA to produce the mature 5'-terminus. It can also cleave other RNA substrates such as 4.5S RNA. The protein component plays an auxiliary but essential role in vivo by binding to the 5'-leader sequence and broadening the substrate specificity of the ribozyme. The protein is Ribonuclease P protein component of Helicobacter hepaticus (strain ATCC 51449 / 3B1).